Here is a 517-residue protein sequence, read N- to C-terminus: UDP-N-acetylmuramyl-tripeptide synthetase (517 aa).

UDP-N-acetyl-alpha-D-muramoyl-L-alanyl-D-glutamate is bound at residue Ser-38. Residue 116–122 coordinates ATP; sequence GTKGKTT. UDP-N-acetyl-alpha-D-muramoyl-L-alanyl-D-glutamate-binding positions include Asn-160, 162-163, Ser-189, and Arg-197; that span reads TT. At Lys-231 the chain carries N6-carboxylysine.

The protein belongs to the MurCDEF family. MurE subfamily. Carboxylation is probably crucial for Mg(2+) binding and, consequently, for the gamma-phosphate positioning of ATP.

The protein localises to the cytoplasm. Its pathway is cell wall biogenesis; peptidoglycan biosynthesis. In terms of biological role, catalyzes the addition of an amino acid to the nucleotide precursor UDP-N-acetylmuramoyl-L-alanyl-D-glutamate (UMAG) in the biosynthesis of bacterial cell-wall peptidoglycan. This chain is UDP-N-acetylmuramyl-tripeptide synthetase, found in Lacticaseibacillus paracasei (strain ATCC 334 / BCRC 17002 / CCUG 31169 / CIP 107868 / KCTC 3260 / NRRL B-441) (Lactobacillus paracasei).